The following is a 333-amino-acid chain: Porphobilinogen deaminase (333 aa).

S-(dipyrrolylmethanemethyl)cysteine is present on cysteine 255.

It belongs to the HMBS family. Monomer. Requires dipyrromethane as cofactor.

It carries out the reaction 4 porphobilinogen + H2O = hydroxymethylbilane + 4 NH4(+). It participates in porphyrin-containing compound metabolism; protoporphyrin-IX biosynthesis; coproporphyrinogen-III from 5-aminolevulinate: step 2/4. Tetrapolymerization of the monopyrrole PBG into the hydroxymethylbilane pre-uroporphyrinogen in several discrete steps. This is Porphobilinogen deaminase from Burkholderia vietnamiensis (strain G4 / LMG 22486) (Burkholderia cepacia (strain R1808)).